Reading from the N-terminus, the 205-residue chain is Ribosome maturation factor RimP (205 aa).

Residues 1 to 13 (MSNAEATTSSDRT) are compositionally biased toward polar residues. A disordered region spans residues 1-27 (MSNAEATTSSDRTGTGKAEAESVHNPE). Residues 18–27 (AEAESVHNPE) are compositionally biased toward basic and acidic residues.

The protein belongs to the RimP family.

The protein resides in the cytoplasm. Functionally, required for maturation of 30S ribosomal subunits. The polypeptide is Ribosome maturation factor RimP (Arthrobacter sp. (strain FB24)).